The chain runs to 276 residues: Putative metal-binding protein CT_415 (276 aa).

The signal sequence occupies residues 1-18 (MRLLFLLLFSLGITCSYG). A divalent metal cation is bound by residues H59, H121, H185, and D256.

It belongs to the bacterial solute-binding protein 9 family.

It localises to the periplasm. Its function is as follows. Part of an ATP-binding cassette (ABC) transport system involved in metal import. Binds a metal with high affinity and specificity and delivers it to the membrane permease for translocation into the cytoplasm. The sequence is that of Putative metal-binding protein CT_415 from Chlamydia trachomatis serovar D (strain ATCC VR-885 / DSM 19411 / UW-3/Cx).